The chain runs to 286 residues: MEIFKTCFLMVVLMLLFVFVGGYVGGQQGMIIAFLVALGMNFFSYFFSDKLVLKRYNAVEVSKKNAKGLYAIVRRLSQNAGLPMPKVYIIPERAPNAFATGRNPSHAAVAVTEGLLNLLNENEIEGVLAHELSHVRHYDILTGSIAAVMAGAIAMLANFAKFGAASGSNRNTQKGNAAIMLIIALIMPLAATIIQMAISREREYKADKGAALLTGHPEWLESALNKLENYSNSYTMQNASPQSAHMFIINPFGDIKNTLSTLFRTHPSTSDRIAELKKIGMQLKNR.

The next 2 helical transmembrane spans lie at 6-26 (TCFL…YVGG) and 28-48 (QGMI…YFFS). Histidine 130 contributes to the Zn(2+) binding site. Residue glutamate 131 is part of the active site. A Zn(2+)-binding site is contributed by histidine 134. The next 2 helical transmembrane spans lie at 140–160 (ILTG…ANFA) and 178–198 (AIML…QMAI). A Zn(2+)-binding site is contributed by glutamate 203.

It belongs to the peptidase M48B family. Zn(2+) is required as a cofactor.

It localises to the cell inner membrane. The sequence is that of Protease HtpX homolog from Campylobacter curvus (strain 525.92).